Consider the following 606-residue polypeptide: Aspartate--tRNA(Asp/Asn) ligase (606 aa).

Residue Glu-177 coordinates L-aspartate. Positions 201–204 (QLFK) are aspartate. Arg-223 contributes to the L-aspartate binding site. ATP contacts are provided by residues 223–225 (RDE) and Gln-232. His-461 is an L-aspartate binding site. An ATP-binding site is contributed by Glu-499. L-aspartate is bound at residue Arg-506. Residue 551–554 (GMDR) coordinates ATP.

This sequence belongs to the class-II aminoacyl-tRNA synthetase family. Type 1 subfamily. In terms of assembly, homodimer.

It is found in the cytoplasm. It catalyses the reaction tRNA(Asx) + L-aspartate + ATP = L-aspartyl-tRNA(Asx) + AMP + diphosphate. Its function is as follows. Aspartyl-tRNA synthetase with relaxed tRNA specificity since it is able to aspartylate not only its cognate tRNA(Asp) but also tRNA(Asn). Reaction proceeds in two steps: L-aspartate is first activated by ATP to form Asp-AMP and then transferred to the acceptor end of tRNA(Asp/Asn). This is Aspartate--tRNA(Asp/Asn) ligase from Prochlorococcus marinus (strain MIT 9303).